A 135-amino-acid chain; its full sequence is ATP synthase epsilon chain (135 aa).

It belongs to the ATPase epsilon chain family. In terms of assembly, F-type ATPases have 2 components, CF(1) - the catalytic core - and CF(0) - the membrane proton channel. CF(1) has five subunits: alpha(3), beta(3), gamma(1), delta(1), epsilon(1). CF(0) has three main subunits: a, b and c.

The protein resides in the cell inner membrane. Its function is as follows. Produces ATP from ADP in the presence of a proton gradient across the membrane. This chain is ATP synthase epsilon chain, found in Rhizobium etli (strain ATCC 51251 / DSM 11541 / JCM 21823 / NBRC 15573 / CFN 42).